The primary structure comprises 132 residues: Large ribosomal subunit protein uL14 (132 aa).

This sequence belongs to the universal ribosomal protein uL14 family. Part of the 50S ribosomal subunit. Forms a cluster with proteins L3 and L24e, part of which may contact the 16S rRNA in 2 intersubunit bridges.

Binds to 23S rRNA. Forms part of two intersubunit bridges in the 70S ribosome. In Methanosarcina barkeri (strain Fusaro / DSM 804), this protein is Large ribosomal subunit protein uL14.